A 102-amino-acid chain; its full sequence is Protein translation factor SUI1 homolog (102 aa).

This sequence belongs to the SUI1 family.

In Methanosarcina acetivorans (strain ATCC 35395 / DSM 2834 / JCM 12185 / C2A), this protein is Protein translation factor SUI1 homolog.